The following is a 449-amino-acid chain: Exodeoxyribonuclease 7 large subunit (449 aa).

The protein belongs to the XseA family. As to quaternary structure, heterooligomer composed of large and small subunits.

It localises to the cytoplasm. The enzyme catalyses Exonucleolytic cleavage in either 5'- to 3'- or 3'- to 5'-direction to yield nucleoside 5'-phosphates.. Bidirectionally degrades single-stranded DNA into large acid-insoluble oligonucleotides, which are then degraded further into small acid-soluble oligonucleotides. The protein is Exodeoxyribonuclease 7 large subunit of Salmonella paratyphi B (strain ATCC BAA-1250 / SPB7).